Consider the following 83-residue polypeptide: MIYKAVFVCLVLVLLGDVFCSPRNSGGGTLNDNPFEKRTDCRFVGAKCTKANNPCVGKVCNGYQLYCPVDDDHCIMKLTFIPG.

An N-terminal signal peptide occupies residues 1-20; it reads MIYKAVFVCLVLVLLGDVFC. Residues 21-36 constitute a propeptide that is removed on maturation; it reads SPRNSGGGTLNDNPFE. Proline 82 is modified (proline amide).

Contains 3 disulfide bonds. As to expression, expressed by acrorhagi.

Its subcellular location is the secreted. The protein localises to the nematocyst. In terms of biological role, toxin. In Actinia equina (Beadlet anemone), this protein is U-actitoxin-Aeq6b.